Here is a 207-residue protein sequence, read N- to C-terminus: Outer-membrane lipoprotein LolB (207 aa).

Residues 1–21 (MPLPDFRFIRLLPLAALVLTA) form the signal peptide. Residue C22 is the site of N-palmitoyl cysteine attachment. A lipid anchor (S-diacylglycerol cysteine) is attached at C22.

The protein belongs to the LolB family. In terms of assembly, monomer.

It is found in the cell outer membrane. In terms of biological role, plays a critical role in the incorporation of lipoproteins in the outer membrane after they are released by the LolA protein. This Escherichia coli O6:K15:H31 (strain 536 / UPEC) protein is Outer-membrane lipoprotein LolB.